Consider the following 748-residue polypeptide: Cysteine--tRNA ligase, cytoplasmic (748 aa).

Positions Met1–Gln25 are disordered. Position 2 is an N-acetylalanine (Ala2). Position 19 is a phosphoserine (Ser19). Residue Cys55 coordinates Zn(2+). Gly56 contributes to the L-cysteine binding site. The short motif at Pro57 to His67 is the 'HIGH' region element. Thr96 contacts L-cysteine. Residues Lys101–Lys104 carry the 'KIIK' region motif. A phosphoserine mark is found at Ser305 and Ser307. The Zn(2+) site is built by Cys348, His373, and Glu377. Residue His373 participates in L-cysteine binding. Residues Lys406–Ser410 carry the 'KMSKS' region motif. Position 409 (Lys409) interacts with ATP. 2 stretches are compositionally biased toward basic and acidic residues: residues Lys654–Lys679 and Lys700–Ser717. Disordered regions lie at residues Lys654–Pro686 and Lys700–Ala721. Ser746 carries the phosphoserine modification.

In terms of assembly, homodimer. Zn(2+) is required as a cofactor.

The protein localises to the cytoplasm. It catalyses the reaction tRNA(Cys) + L-cysteine + ATP = L-cysteinyl-tRNA(Cys) + AMP + diphosphate. Functionally, catalyzes the ATP-dependent ligation of cysteine to tRNA(Cys). In Macaca fascicularis (Crab-eating macaque), this protein is Cysteine--tRNA ligase, cytoplasmic (CARS1).